The following is a 148-amino-acid chain: UPF0756 membrane protein Ent638_1667 (148 aa).

The next 4 helical transmembrane spans lie at 14 to 34, 51 to 71, 86 to 106, and 121 to 141; these read ALGF…LIIV, LTIG…SGTL, LIAI…VTLM, and VLGV…AGLV.

Belongs to the UPF0756 family.

It localises to the cell membrane. This chain is UPF0756 membrane protein Ent638_1667, found in Enterobacter sp. (strain 638).